We begin with the raw amino-acid sequence, 367 residues long: tRNA/tmRNA (uracil-C(5))-methyltransferase (367 aa).

Gln-190, Tyr-218, Asn-223, Glu-239, and Asp-299 together coordinate S-adenosyl-L-methionine. Cys-324 (nucleophile) is an active-site residue. The Proton acceptor role is filled by Glu-358.

This sequence belongs to the class I-like SAM-binding methyltransferase superfamily. RNA M5U methyltransferase family. TrmA subfamily.

The catalysed reaction is uridine(54) in tRNA + S-adenosyl-L-methionine = 5-methyluridine(54) in tRNA + S-adenosyl-L-homocysteine + H(+). It carries out the reaction uridine(341) in tmRNA + S-adenosyl-L-methionine = 5-methyluridine(341) in tmRNA + S-adenosyl-L-homocysteine + H(+). In terms of biological role, dual-specificity methyltransferase that catalyzes the formation of 5-methyluridine at position 54 (m5U54) in all tRNAs, and that of position 341 (m5U341) in tmRNA (transfer-mRNA). This chain is tRNA/tmRNA (uracil-C(5))-methyltransferase, found in Musicola paradisiaca (strain Ech703) (Dickeya paradisiaca).